We begin with the raw amino-acid sequence, 184 residues long: Lactoylglutathione lyase (184 aa).

A2 is subject to N-acetylalanine. A disulfide bridge connects residues C19 and C20. A VOC domain is found at L31–P177. Substrate is bound by residues Q34 and R38. Q34 contacts Zn(2+). A disulfide bond links C61 and C139. The residue at position 88 (K88) is an N6-succinyllysine. A Zn(2+)-binding site is contributed by E100. Substrate is bound at residue N104. T107 is modified (phosphothreonine). Positions 123 and 127 each coordinate substrate. H127 provides a ligand contact to Zn(2+). Position 139 is an S-glutathionyl cysteine; alternate (C139). At K148 the chain carries N6-acetyllysine; alternate. K148 carries the N6-succinyllysine; alternate modification. K157–M158 is a binding site for substrate. A Zn(2+)-binding site is contributed by E173. E173 serves as the catalytic Proton donor/acceptor.

It belongs to the glyoxalase I family. As to quaternary structure, homodimer. It depends on Zn(2+) as a cofactor. In terms of processing, glutathionylation at Cys-139 inhibits enzyme activity. Post-translationally, phosphorylated at Thr-107 in the presence of CaMK2. However, this is a consensus site for phosphorylation by CK2 so phosphorylation may be mediated by CK2 rather than CaMK2. Phosphorylation is induced by TNF and suppresses the TNF-induced transcriptional activity of NF-kappa-B. Exists in a nitric oxide (NO)-modified form. The exact nature of the modification is unknown, but it suppresses the TNF-induced transcriptional activity of NF-kappa-B.

The enzyme catalyses (R)-S-lactoylglutathione = methylglyoxal + glutathione. It participates in secondary metabolite metabolism; methylglyoxal degradation; (R)-lactate from methylglyoxal: step 1/2. Regulated by oxidation of Cys-139 in response to the redox state of the cell. Results in the alternative formation of cystine or glutathione-bound cysteine, the latter modification leading to reduced enzyme activity. In terms of biological role, catalyzes the conversion of hemimercaptal, formed from methylglyoxal and glutathione, to S-lactoylglutathione. Involved in the regulation of TNF-induced transcriptional activity of NF-kappa-B. Required for normal osteoclastogenesis. This Homo sapiens (Human) protein is Lactoylglutathione lyase (GLO1).